We begin with the raw amino-acid sequence, 184 residues long: MILMHDITRDGNPVLRQVAKPLTFPLADEYKELADEMMQYLINSQDPKIAEKHQLRAGVGLAAPQVGKSIQMAALLVPNDKGEIIFKEVFVNPKIISESVRKACLAEGEGCLSVDKDIEGYVPRPDKLKIHYYTVDGEEKTIRLKDYPAIVASHEIDHLNGHLFYDRINKQNPFDLAEDTIVIS.

C111 and H154 together coordinate Fe cation. Residue E155 is part of the active site. H158 is a Fe cation binding site.

It belongs to the polypeptide deformylase family. Requires Fe(2+) as cofactor.

It catalyses the reaction N-terminal N-formyl-L-methionyl-[peptide] + H2O = N-terminal L-methionyl-[peptide] + formate. Removes the formyl group from the N-terminal Met of newly synthesized proteins. Requires at least a dipeptide for an efficient rate of reaction. N-terminal L-methionine is a prerequisite for activity but the enzyme has broad specificity at other positions. In Lactobacillus gasseri (strain ATCC 33323 / DSM 20243 / BCRC 14619 / CIP 102991 / JCM 1131 / KCTC 3163 / NCIMB 11718 / NCTC 13722 / AM63), this protein is Peptide deformylase.